Reading from the N-terminus, the 325-residue chain is Adenine deaminase (325 aa).

Zn(2+) is bound by residues H11, H13, and H189. E192 (proton donor) is an active-site residue. Residue D270 participates in Zn(2+) binding. D271 is a substrate binding site.

Belongs to the metallo-dependent hydrolases superfamily. Adenosine and AMP deaminases family. Adenine deaminase type 2 subfamily. Zn(2+) is required as a cofactor.

It catalyses the reaction adenine + H2O + H(+) = hypoxanthine + NH4(+). Catalyzes the hydrolytic deamination of adenine to hypoxanthine. Plays an important role in the purine salvage pathway and in nitrogen catabolism. This Agrobacterium fabrum (strain C58 / ATCC 33970) (Agrobacterium tumefaciens (strain C58)) protein is Adenine deaminase.